The primary structure comprises 907 residues: Whirlin (907 aa).

The PDZ 1 domain occupies 140–223 (LVSLRRAKAH…LVLSVYSAGR (84 aa)). A disordered region spans residues 243–264 (SISPPSGLPQPHGGALRQQEGD). A PDZ 2 domain is found at 279 to 361 (KVNLVLGDGR…LILTVKDVGR (83 aa)). Disordered stretches follow at residues 502–540 (SMKA…TVSS), 565–663 (SVDD…SSKR), 684–717 (QSPP…QTGT), and 742–815 (PQTR…PTST). A compositionally biased stretch (low complexity) spans 521 to 540 (SYSDTGSSTGSHGTSTTVSS). Polar residues predominate over residues 609-626 (PPSSMPSCSGTVFSAPQN). Low complexity predominate over residues 628–642 (SPPAGTAPTPGTSSA). S685 bears the Phosphoserine mark. Residues 743-762 (QTRTASTLSQLSDSGQTLSE) are compositionally biased toward polar residues. The span at 789–800 (SSKELPRNERPT) shows a compositional bias: basic and acidic residues. In terms of domain architecture, PDZ 3 spans 816 to 899 (LVRVKKSAAT…TKDRDYIDFL (84 aa)).

Forms homooligomers. Interacts (via C-terminal PDZ domain) with MYO15A; this interaction is necessary for localization of WHRN to stereocilia tips. Interacts (via C-terminal PDZ domain) with MPP1/p55. Interacts with LRRC4C/NGL1. Interacts with MYO7A. Interacts with RPGR. Interacts with EPS8. Interacts with CASK. Interacts with CIB2. Component of USH2 complex, composed of ADGRV1, PDZD7, USH2A and WHRN. Interacts (via PDZ domains) with PDZD7; the interaction is direct. Interacts (via N-terminal PDZ domain) with USH2A (via cytoplasmic region). Interacts with ADGRV1/MASS1 (via cytoplasmic region).

It localises to the cytoplasm. The protein resides in the cell projection. It is found in the stereocilium. Its subcellular location is the growth cone. The protein localises to the photoreceptor inner segment. It localises to the synapse. Functionally, involved in hearing and vision as member of the USH2 complex. Necessary for elongation and maintenance of inner and outer hair cell stereocilia in the organ of Corti in the inner ear. Involved in the maintenance of the hair bundle ankle region, which connects stereocilia in cochlear hair cells of the inner ear. In retina photoreceptors, required for the maintenance of periciliary membrane complex that seems to play a role in regulating intracellular protein transport. In Homo sapiens (Human), this protein is Whirlin.